A 1690-amino-acid chain; its full sequence is Lysine-specific demethylase 5A (1690 aa).

The JmjN domain occupies 19 to 60 (CPVFEPSWEEFTDPLSFIGRIRPLAEKTGICKIRPPKDWQPP). The 91-residue stretch at 84-174 (TRVRLDFLDQ…ILYPYELFQS (91 aa)) folds into the ARID domain. Residue lysine 191 forms a Glycyl lysine isopeptide (Lys-Gly) (interchain with G-Cter in SUMO2) linkage. A Phosphoserine modification is found at serine 204. A PHD-type 1 zinc finger spans residues 293-343 (LYVCMFCGRGNNEDKLLLCDGCDDSYHTFCLIPPLPDVPKGDWRCPKCVAE). Tyrosine 409 lines the 2-oxoglutarate pocket. The GSGFP motif motif lies at 419–423 (GSGFP). Positions 437–603 (EYALSGWNLN…IGRQCVNHYR (167 aa)) constitute a JmjC domain. Fe cation contacts are provided by histidine 483 and glutamate 485. 2-oxoglutarate is bound by residues serine 491, asparagine 493, and lysine 501. Histidine 571 is a binding site for Fe cation. Residues 676 to 728 (CSACRTTCFLSALTCSCNPERLVCLYHPTDLCPCPMQKKCLRYRYPLEDLPSL) form a C5HC2 zinc finger. A Glycyl lysine isopeptide (Lys-Gly) (interchain with G-Cter in SUMO2) cross-link involves residue lysine 1007. Serine 1111 is subject to Phosphoserine. The PHD-type 2 zinc-finger motif lies at 1161-1218 (VKFCICRKTASGFMLQCELCKDWFHNSCVPLPKSSSQKKGSSWQAKEVKFLCPLCMRS). Disordered regions lie at residues 1327–1348 (SVSS…SDED) and 1407–1433 (KSCS…LEPP). Phosphoserine occurs at positions 1330 and 1331. Acidic residues predominate over residues 1337 to 1348 (DYDDEETDSDED). Threonine 1343 carries the post-translational modification Phosphothreonine. Serine 1345 bears the Phosphoserine mark. Residues serine 1438 and serine 1488 each carry the phosphoserine modification. Composition is skewed to basic and acidic residues over residues 1490–1503 (EEKP…DSSE) and 1520–1530 (GKQKSKELKKM). 2 disordered regions span residues 1490–1509 (EEKP…RKRK) and 1516–1543 (LFGE…LGAD). Tyrosine 1595 carries the post-translational modification Phosphotyrosine. 2 positions are modified to phosphoserine: serine 1598 and serine 1603. Residues 1607–1661 (NAVCAAQNCQRPCKDKVDWVQCDGGCDEWFHQVCVGVSPEMAENEDYICINCAKK) form a PHD-type 3 zinc finger. Residues 1623–1690 (VDWVQCDGGC…LPMEDLKETS (68 aa)) form an interaction with LMO2 region. A Phosphoserine modification is found at serine 1666.

This sequence belongs to the JARID1 histone demethylase family. As to quaternary structure, interacts with SUZ12; the interaction is direct. Interacts with the viral protein-binding domain of RB1. Interacts with ESR1, MYC, MYCN and LMO2. Interacts with HDAC1; this interaction impairs histone deacetylation by HDAC1. Interacts with BMAL1 and CLOCK. Interacts (via PHD-type 1 zinc finger) with histone H3 unmodified at 'Lys-4' and (via PHD-type 3 zinc finger) with histone H3 di- and trimethylated at 'Lys-4'. Fe(2+) is required as a cofactor.

The protein localises to the nucleus. Its subcellular location is the nucleolus. It catalyses the reaction N(6),N(6),N(6)-trimethyl-L-lysyl(4)-[histone H3] + 3 2-oxoglutarate + 3 O2 = L-lysyl(4)-[histone H3] + 3 formaldehyde + 3 succinate + 3 CO2. With respect to regulation, the inhibitors KDOAM-25, CPI-455 and others inhibits its demethylase activity, resulting to cell growth arrest in cancer cells. Its function is as follows. Histone demethylase that specifically demethylates 'Lys-4' of histone H3, thereby playing a central role in histone code. Does not demethylate histone H3 'Lys-9', H3 'Lys-27', H3 'Lys-36', H3 'Lys-79' or H4 'Lys-20'. Demethylates trimethylated and dimethylated but not monomethylated H3 'Lys-4'. Regulates specific gene transcription through DNA-binding on 5'-CCGCCC-3' motif. May stimulate transcription mediated by nuclear receptors. Involved in transcriptional regulation of Hox proteins during cell differentiation. May participate in transcriptional repression of cytokines such as CXCL12. Plays a role in the regulation of the circadian rhythm and in maintaining the normal periodicity of the circadian clock. In a histone demethylase-independent manner, acts as a coactivator of the CLOCK-BMAL1-mediated transcriptional activation of PER1/2 and other clock-controlled genes and increases histone acetylation at PER1/2 promoters by inhibiting the activity of HDAC1. Seems to act as a transcriptional corepressor for some genes such as MT1F and to favor the proliferation of cancer cells. The chain is Lysine-specific demethylase 5A from Homo sapiens (Human).